A 447-amino-acid polypeptide reads, in one-letter code: Polyamine export protein (447 aa).

Topologically, residues Met1–Ser4 are cytoplasmic. In terms of domain architecture, CNNM transmembrane spans Met1–Glu197. The chain crosses the membrane as a helical span at residues Ile5–Leu25. Over Ala26–Pro54 the chain is Periplasmic. A helical transmembrane segment spans residues Gly55–Val75. Over Gly76–Gln99 the chain is Cytoplasmic. A helical transmembrane segment spans residues Leu100 to Thr120. Residues Pro121–Arg141 are Periplasmic-facing. The helical transmembrane segment at Phe142–Phe162 threads the bilayer. Residues Arg163–Ala447 lie on the Cytoplasmic side of the membrane. 2 consecutive CBS domains span residues Met216 to Met275 and Gln282 to Glu343.

This sequence belongs to the UPF0053 family. PaeA subfamily.

The protein localises to the cell inner membrane. In terms of biological role, involved in cadaverine and putrescine tolerance in stationary phase. May facilitate the efflux of both cadaverine and putrescine from the cytoplasm, reducing potentially toxic levels under certain stress conditions. The protein is Polyamine export protein of Salmonella typhimurium (strain 14028s / SGSC 2262).